The following is a 351-amino-acid chain: Phenoloxidase-activating factor 3 (351 aa).

Positions 1–19 (MWLSLVILGVASAIVNVST) are cleaved as a signal peptide. N-linked (GlcNAc...) asparagine glycosylation is present at asparagine 16. Residues 22–73 (SCTTPNGETATCLPIESCKIFWDYVVTSGADPEINSFLRASLCRQGNYVVCC) enclose the Clip domain. Cystine bridges form between cysteine 23/cysteine 72, cysteine 33/cysteine 64, cysteine 39/cysteine 73, cysteine 89/cysteine 224, cysteine 127/cysteine 143, cysteine 167/cysteine 176, cysteine 268/cysteine 285, and cysteine 295/cysteine 326. The Peptidase S1 domain occupies 97–350 (VLGGEDTDLG…HLDWIKQNVR (254 aa)). Histidine 142 (charge relay system) is an active-site residue. Ca(2+) contacts are provided by glutamate 158, aspartate 160, alanine 163, and aspartate 166. Aspartate 204 acts as the Charge relay system in catalysis. Serine 299 serves as the catalytic Charge relay system.

Belongs to the peptidase S1 family. CLIP subfamily. In terms of assembly, in the active form, heterodimer of a light chain and a heavy chain; disulfide-linked. Proteolytically cleaved.

Its subcellular location is the secreted. Its activity is regulated as follows. Cleavage of PPAF2 is Ca(2+)-independent. Inhibited by heparin. In terms of biological role, serine endopeptidase which, by cleaving prophenoloxidase activating factor PPAF2, is required for the activation of the prophenoloxidase cascade probably following the recognition of pathogen-derived products. The sequence is that of Phenoloxidase-activating factor 3 from Holotrichia diomphalia (Korean black chafer).